A 238-amino-acid chain; its full sequence is 2-C-methyl-D-erythritol 4-phosphate cytidylyltransferase (238 aa).

This sequence belongs to the IspD/TarI cytidylyltransferase family. IspD subfamily.

It catalyses the reaction 2-C-methyl-D-erythritol 4-phosphate + CTP + H(+) = 4-CDP-2-C-methyl-D-erythritol + diphosphate. Its pathway is isoprenoid biosynthesis; isopentenyl diphosphate biosynthesis via DXP pathway; isopentenyl diphosphate from 1-deoxy-D-xylulose 5-phosphate: step 2/6. In terms of biological role, catalyzes the formation of 4-diphosphocytidyl-2-C-methyl-D-erythritol from CTP and 2-C-methyl-D-erythritol 4-phosphate (MEP). This is 2-C-methyl-D-erythritol 4-phosphate cytidylyltransferase from Aliivibrio fischeri (strain MJ11) (Vibrio fischeri).